We begin with the raw amino-acid sequence, 265 residues long: Indole-3-glycerol phosphate synthase (265 aa).

The protein belongs to the TrpC family.

The enzyme catalyses 1-(2-carboxyphenylamino)-1-deoxy-D-ribulose 5-phosphate + H(+) = (1S,2R)-1-C-(indol-3-yl)glycerol 3-phosphate + CO2 + H2O. It participates in amino-acid biosynthesis; L-tryptophan biosynthesis; L-tryptophan from chorismate: step 4/5. The protein is Indole-3-glycerol phosphate synthase of Xanthomonas axonopodis pv. citri (strain 306).